Reading from the N-terminus, the 223-residue chain is Thiamine-phosphate synthase (223 aa).

4-amino-2-methyl-5-(diphosphooxymethyl)pyrimidine is bound by residues 42-46 (QLRDK) and N83. Mg(2+)-binding residues include D84 and D103. Position 122 (S122) interacts with 4-amino-2-methyl-5-(diphosphooxymethyl)pyrimidine. 2-[(2R,5Z)-2-carboxy-4-methylthiazol-5(2H)-ylidene]ethyl phosphate is bound at residue 148-150 (TPT). Residue K151 coordinates 4-amino-2-methyl-5-(diphosphooxymethyl)pyrimidine. G179 is a binding site for 2-[(2R,5Z)-2-carboxy-4-methylthiazol-5(2H)-ylidene]ethyl phosphate.

It belongs to the thiamine-phosphate synthase family. Mg(2+) is required as a cofactor.

The catalysed reaction is 2-[(2R,5Z)-2-carboxy-4-methylthiazol-5(2H)-ylidene]ethyl phosphate + 4-amino-2-methyl-5-(diphosphooxymethyl)pyrimidine + 2 H(+) = thiamine phosphate + CO2 + diphosphate. It carries out the reaction 2-(2-carboxy-4-methylthiazol-5-yl)ethyl phosphate + 4-amino-2-methyl-5-(diphosphooxymethyl)pyrimidine + 2 H(+) = thiamine phosphate + CO2 + diphosphate. The enzyme catalyses 4-methyl-5-(2-phosphooxyethyl)-thiazole + 4-amino-2-methyl-5-(diphosphooxymethyl)pyrimidine + H(+) = thiamine phosphate + diphosphate. It functions in the pathway cofactor biosynthesis; thiamine diphosphate biosynthesis; thiamine phosphate from 4-amino-2-methyl-5-diphosphomethylpyrimidine and 4-methyl-5-(2-phosphoethyl)-thiazole: step 1/1. Condenses 4-methyl-5-(beta-hydroxyethyl)thiazole monophosphate (THZ-P) and 2-methyl-4-amino-5-hydroxymethyl pyrimidine pyrophosphate (HMP-PP) to form thiamine monophosphate (TMP). The polypeptide is Thiamine-phosphate synthase (Mycobacterium avium (strain 104)).